Reading from the N-terminus, the 125-residue chain is Oxytocin-neurophysin 1 (125 aa).

Residues 1–19 (MAGPSLACCLLGLLALTSA) form the signal peptide. Cys20 and Cys25 are joined by a disulfide. Gly28 is subject to Glycine amide. 7 disulfides stabilise this stretch: Cys41-Cys85, Cys44-Cys58, Cys52-Cys75, Cys59-Cys65, Cys92-Cys104, Cys98-Cys116, and Cys105-Cys110.

It belongs to the vasopressin/oxytocin family. In terms of assembly, interacts with oxytocin receptor (Ki=1.5 nM). Interacts with vasopressin V1aR/AVPR1A (Ki=37 nM), V1bR/AVPR1B (Ki=222 nM), and V2R/AVPR2 receptors (Ki=823 nM).

Functionally, neurophysin 1 specifically binds oxytocin. In terms of biological role, oxytocin causes contraction of the smooth muscle of the uterus and of the mammary gland. Acts by binding to oxytocin receptor (OXTR). The sequence is that of Oxytocin-neurophysin 1 (OXT) from Sus scrofa (Pig).